Reading from the N-terminus, the 437-residue chain is Ribosomal protein uS12 methylthiotransferase RimO (437 aa).

One can recognise an MTTase N-terminal domain in the interval 5–116 (PTIAISHLGC…IVEIVERVET (112 aa)). Positions 14, 50, 79, 154, 158, and 161 each coordinate [4Fe-4S] cluster. In terms of domain architecture, Radical SAM core spans 140 to 369 (TTSEGVAYLR…MLTQQPISER (230 aa)). One can recognise a TRAM domain in the interval 372 to 437 (QAYIGQTVDV…DTYDLYGEIV (66 aa)).

It belongs to the methylthiotransferase family. RimO subfamily. Requires [4Fe-4S] cluster as cofactor.

It is found in the cytoplasm. It carries out the reaction L-aspartate(89)-[ribosomal protein uS12]-hydrogen + (sulfur carrier)-SH + AH2 + 2 S-adenosyl-L-methionine = 3-methylsulfanyl-L-aspartate(89)-[ribosomal protein uS12]-hydrogen + (sulfur carrier)-H + 5'-deoxyadenosine + L-methionine + A + S-adenosyl-L-homocysteine + 2 H(+). Functionally, catalyzes the methylthiolation of an aspartic acid residue of ribosomal protein uS12. This is Ribosomal protein uS12 methylthiotransferase RimO from Microcystis aeruginosa (strain NIES-843 / IAM M-2473).